The following is a 201-amino-acid chain: Putative lipoprotein LppC (201 aa).

An N-terminal signal peptide occupies residues 1-23 (MTSTLHRTPLATAGLALVVALGG). Cys-24 carries N-palmitoyl cysteine lipidation. A lipid anchor (S-diacylglycerol cysteine) is attached at Cys-24. 3 prevents bacterial uptake by a human macrophage-like cell line regions span residues 77-96 (GANV…AELA), 97-116 (LVVD…IVTG), and 117-136 (IAPG…GHSV). Residues 122–141 (GSTADGQTPAGGHSVPNSGG) are disordered.

This sequence belongs to the UPF0098 family.

It is found in the cell membrane. It localises to the cell surface. Its function is as follows. Probably involved in bacterial recognition and uptake by its host (human). The polypeptide is Putative lipoprotein LppC (Mycobacterium tuberculosis (strain ATCC 25618 / H37Rv)).